The chain runs to 306 residues: Serrate RNA effector molecule homolog (306 aa).

The segment at 1–28 (HKEEELLGSSGGPPPEEPPKEGNPAEIN) is disordered. Thr101 is modified (phosphothreonine). Phosphoserine is present on Ser109. Residues 251-284 (GPPYPHGPYGAGRGNYDAFRGQGGYPGKPRNRMV) are disordered. 3 positions are modified to omega-N-methylarginine: Arg263, Arg270, and Arg280.

This sequence belongs to the ARS2 family. In terms of assembly, interacts with CASP8AP2, ERBB4, NCBP1/CBP80 and DROSHA. Interacts with LUZP4. Interacts with NCBP2/CBP20 and NCBP3.

It is found in the nucleus. It localises to the nucleoplasm. The protein resides in the cytoplasm. Acts as a mediator between the cap-binding complex (CBC) and the primary microRNAs (miRNAs) processing machinery during cell proliferation. Contributes to the stability and delivery of capped primary miRNA transcripts to the primary miRNA processing complex containing DGCR8 and DROSHA, thereby playing a role in RNA-mediated gene silencing (RNAi) by miRNAs. Binds capped RNAs (m7GpppG-capped RNA); however interaction is probably mediated via its interaction with NCBP1/CBP80 component of the CBC complex. Involved in cell cycle progression at S phase. Does not directly confer arsenite resistance but rather modulates arsenic sensitivity. Independently of its activity on miRNAs, necessary and sufficient to promote neural stem cell self-renewal. Does so by directly binding SOX2 promoter and positively regulating its transcription. This chain is Serrate RNA effector molecule homolog (SRRT), found in Cricetulus griseus (Chinese hamster).